We begin with the raw amino-acid sequence, 475 residues long: UDP-glycosyltransferase 84A4 (475 aa).

His20 acts as the Proton acceptor in catalysis. Residue His20 participates in an anthocyanidin binding. The UDP-alpha-D-glucose site is built by Gln342, His357, Trp360, Asn361, Ser362, and Glu365. Gly380 provides a ligand contact to an anthocyanidin. UDP-alpha-D-glucose-binding residues include Asp381 and Gln382.

Belongs to the UDP-glycosyltransferase family.

It catalyses the reaction (E)-4-coumarate + UDP-alpha-D-glucose = 4-O-(beta-D-glucosyl)-trans-4-coumarate + UDP + H(+). It carries out the reaction (E)-ferulate + UDP-alpha-D-glucose = 1-O-[(E)-feruloyl]-beta-D-glucose + UDP. The catalysed reaction is (E)-caffeate + UDP-alpha-D-glucose = 1-O-[(E)-caffeoyl]-beta-D-glucose + UDP. The enzyme catalyses (E)-sinapate + UDP-alpha-D-glucose = 1-O-(trans-sinapoyl)-beta-D-glucose + UDP. It catalyses the reaction (E)-cinnamate + UDP-alpha-D-glucose = 1-O-(trans-cinnamoyl)-beta-D-glucose + UDP. In terms of biological role, UDP-glucosyltransferase that forms glucose esters with phenylpropanoids. Glucosylates 4-coumarate, ferulate, caffeate, sinapate and cinnamate. The polypeptide is UDP-glycosyltransferase 84A4 (Arabidopsis thaliana (Mouse-ear cress)).